Reading from the N-terminus, the 430-residue chain is Adenylosuccinate synthetase (430 aa).

GTP contacts are provided by residues 12 to 18 and 40 to 42; these read GDEGKGK and GHT. Aspartate 13 acts as the Proton acceptor in catalysis. Positions 13 and 40 each coordinate Mg(2+). IMP contacts are provided by residues 13 to 16, 38 to 41, threonine 129, arginine 143, glutamine 224, threonine 239, and arginine 303; these read DEGK and NAGH. The active-site Proton donor is histidine 41. Residue 299 to 305 coordinates substrate; it reads TVSNRER. Residues arginine 305, 331 to 333, and 413 to 415 each bind GTP; these read KLD and STG.

Belongs to the adenylosuccinate synthetase family. Homodimer. Requires Mg(2+) as cofactor.

The protein localises to the cytoplasm. The catalysed reaction is IMP + L-aspartate + GTP = N(6)-(1,2-dicarboxyethyl)-AMP + GDP + phosphate + 2 H(+). Its pathway is purine metabolism; AMP biosynthesis via de novo pathway; AMP from IMP: step 1/2. Functionally, plays an important role in the de novo pathway of purine nucleotide biosynthesis. Catalyzes the first committed step in the biosynthesis of AMP from IMP. The protein is Adenylosuccinate synthetase of Ehrlichia ruminantium (strain Welgevonden).